The sequence spans 310 residues: MNKANMLRTDKDMQIILFSEVSVGISANSILFIAHVCMILGENRPKPIDLYIAFLSLTQLMLLITMGLIAVDMFLSQGIWDSTTCQSLIYLHRLLRGLSLCATCLLNILWTITLSSRSFCSTKFKHKSPHHISGAFIFFCVLYMSFSSHLFISIIATHNLTSENFIYVTQSCSLLPLSYSRTSMFSAPMAIREAFLVSLMALSSGYMVALLWRHKKQAQHLHSTSLSSKASPEQRATRTILLLMSFFVVLYILENAVFYSRIKFKDGSILYCVQIILCHSYATVNPFVFICTEKHIIKFWESKCGRIVNI.

Residues 1-20 (MNKANMLRTDKDMQIILFSE) are Extracellular-facing. A helical transmembrane segment spans residues 21–41 (VSVGISANSILFIAHVCMILG). Residues 42–50 (ENRPKPIDL) lie on the Cytoplasmic side of the membrane. A helical membrane pass occupies residues 51-71 (YIAFLSLTQLMLLITMGLIAV). The Extracellular segment spans residues 72-93 (DMFLSQGIWDSTTCQSLIYLHR). Cysteine 85 and cysteine 172 form a disulfide bridge. The chain crosses the membrane as a helical span at residues 94–114 (LLRGLSLCATCLLNILWTITL). Over 115-134 (SSRSFCSTKFKHKSPHHISG) the chain is Cytoplasmic. Residues 135-155 (AFIFFCVLYMSFSSHLFISII) traverse the membrane as a helical segment. Topologically, residues 156–190 (ATHNLTSENFIYVTQSCSLLPLSYSRTSMFSAPMA) are extracellular. N-linked (GlcNAc...) asparagine glycosylation occurs at asparagine 159. The helical transmembrane segment at 191–211 (IREAFLVSLMALSSGYMVALL) threads the bilayer. At 212-238 (WRHKKQAQHLHSTSLSSKASPEQRATR) the chain is on the cytoplasmic side. A helical transmembrane segment spans residues 239 to 259 (TILLLMSFFVVLYILENAVFY). The Extracellular portion of the chain corresponds to 260-268 (SRIKFKDGS). Residues 269 to 289 (ILYCVQIILCHSYATVNPFVF) traverse the membrane as a helical segment. Residues 290–310 (ICTEKHIIKFWESKCGRIVNI) are Cytoplasmic-facing.

Belongs to the G-protein coupled receptor 1 family.

The protein resides in the cell membrane. Its function is as follows. Putative pheromone receptor implicated in the regulation of social and reproductive behavior. In Mus musculus (Mouse), this protein is Vomeronasal type-1 receptor 40 (Vmn1r40).